Here is a 325-residue protein sequence, read N- to C-terminus: ATP synthase gamma chain (325 aa).

Belongs to the ATPase gamma chain family. F-type ATPases have 2 components, CF(1) - the catalytic core - and CF(0) - the membrane proton channel. CF(1) has five subunits: alpha(3), beta(3), gamma(1), delta(1), epsilon(1). CF(0) has three main subunits: a, b and c.

It localises to the cell membrane. In terms of biological role, produces ATP from ADP in the presence of a proton gradient across the membrane. The gamma chain is believed to be important in regulating ATPase activity and the flow of protons through the CF(0) complex. This is ATP synthase gamma chain from Corynebacterium diphtheriae (strain ATCC 700971 / NCTC 13129 / Biotype gravis).